The chain runs to 526 residues: Peptide chain release factor 3 (526 aa).

Residues 8 to 277 (NKRRTFAIIS…GLTQWAPAPQ (270 aa)) form the tr-type G domain. GTP is bound by residues 17–24 (SHPDAGKT), 85–89 (DTPGH), and 139–142 (NKLD).

The protein belongs to the TRAFAC class translation factor GTPase superfamily. Classic translation factor GTPase family. PrfC subfamily.

It is found in the cytoplasm. Functionally, increases the formation of ribosomal termination complexes and stimulates activities of RF-1 and RF-2. It binds guanine nucleotides and has strong preference for UGA stop codons. It may interact directly with the ribosome. The stimulation of RF-1 and RF-2 is significantly reduced by GTP and GDP, but not by GMP. In Histophilus somni (strain 2336) (Haemophilus somnus), this protein is Peptide chain release factor 3.